A 396-amino-acid polypeptide reads, in one-letter code: Elongation factor Tu 2 (396 aa).

The tr-type G domain maps to 10 to 206 (KPHCNIGTIG…AVDAYIPQPE (197 aa)). A G1 region spans residues 19–26 (GHVDHGKT). Residue 19–26 (GHVDHGKT) participates in GTP binding. Residue Thr-26 coordinates Mg(2+). A G2 region spans residues 60–64 (GITIS). A G3 region spans residues 81–84 (DCPG). GTP contacts are provided by residues 81 to 85 (DCPGH) and 136 to 139 (NKCD). The interval 136-139 (NKCD) is G4. Positions 174 to 176 (SAL) are G5.

It belongs to the TRAFAC class translation factor GTPase superfamily. Classic translation factor GTPase family. EF-Tu/EF-1A subfamily. Monomer.

It localises to the cytoplasm. It catalyses the reaction GTP + H2O = GDP + phosphate + H(+). GTP hydrolase that promotes the GTP-dependent binding of aminoacyl-tRNA to the A-site of ribosomes during protein biosynthesis. This chain is Elongation factor Tu 2, found in Rhodopseudomonas palustris (strain BisB5).